Consider the following 561-residue polypeptide: Ribulokinase (561 aa).

It belongs to the ribulokinase family.

The enzyme catalyses D-ribulose + ATP = D-ribulose 5-phosphate + ADP + H(+). The catalysed reaction is L-ribulose + ATP = L-ribulose 5-phosphate + ADP + H(+). The protein operates within carbohydrate degradation; L-arabinose degradation via L-ribulose; D-xylulose 5-phosphate from L-arabinose (bacterial route): step 2/3. This is Ribulokinase from Shouchella clausii (strain KSM-K16) (Alkalihalobacillus clausii).